A 392-amino-acid polypeptide reads, in one-letter code: General receptor for phosphoinositides 1-associated scaffold protein (392 aa).

The disordered stretch occupies residues 1–50; it reads MTLRRLRKLQQKEEATAAPDPAGRAPDSEAARAAPLPSGPPAAAAPPGAP. Pro residues predominate over residues 37–49; sequence PSGPPAAAAPPGA. Thr-76 carries the post-translational modification Phosphothreonine. Ser-93 bears the Phosphoserine mark. Residues 100 to 189 enclose the PDZ domain; the sequence is VLTLEKGDNQ…VLRLETLYGT (90 aa). Residues 180–257 form an interaction with PSCD3 region; it reads VLRLETLYGT…GAGLLPGSLP (78 aa). Tyr-236 carries the post-translational modification Phosphotyrosine. The residue at position 269 (Arg-269) is an Omega-N-methylarginine. A disordered region spans residues 294–315; that stretch reads PQALPPPPPPARALGPSSAETP. A Phosphoserine modification is found at Ser-384.

As to quaternary structure, heteromer. Composed of TAMALIN, CYTH2 and at least one GRM1. Also interacts with GRM2, GRM3 and GRM5. Interacts with CYTH3. Highly expressed in brain, heart and lung, and to a lower extent in embryo, kidney and ovary.

The protein resides in the cytoplasm. Its subcellular location is the perinuclear region. It is found in the cell membrane. It localises to the postsynaptic cell membrane. Functionally, plays a role in intracellular trafficking and contributes to the macromolecular organization of group 1 metabotropic glutamate receptors (mGluRs) at synapses. This chain is General receptor for phosphoinositides 1-associated scaffold protein, found in Mus musculus (Mouse).